The primary structure comprises 152 residues: Large ribosomal subunit protein bL9 (152 aa).

It belongs to the bacterial ribosomal protein bL9 family.

Functionally, binds to the 23S rRNA. The protein is Large ribosomal subunit protein bL9 of Thermosynechococcus vestitus (strain NIES-2133 / IAM M-273 / BP-1).